A 545-amino-acid chain; its full sequence is Ribulokinase (545 aa).

The protein belongs to the ribulokinase family.

The catalysed reaction is D-ribulose + ATP = D-ribulose 5-phosphate + ADP + H(+). It carries out the reaction L-ribulose + ATP = L-ribulose 5-phosphate + ADP + H(+). The protein operates within carbohydrate degradation; L-arabinose degradation via L-ribulose; D-xylulose 5-phosphate from L-arabinose (bacterial route): step 2/3. The sequence is that of Ribulokinase from Staphylococcus aureus (strain MRSA252).